A 310-amino-acid polypeptide reads, in one-letter code: p-hydroxybenzoic acid efflux pump subunit AaeA (310 aa).

Residues 12–32 (AITVVLVILAFIAIFNAWVYY) traverse the membrane as a helical segment.

Belongs to the membrane fusion protein (MFP) (TC 8.A.1) family.

The protein localises to the cell inner membrane. In terms of biological role, forms an efflux pump with AaeB. The chain is p-hydroxybenzoic acid efflux pump subunit AaeA from Shigella sonnei (strain Ss046).